The following is a 548-amino-acid chain: Probable malate:quinone oxidoreductase (548 aa).

The segment at 521-548 is disordered; it reads DKPQAADSTPKPQLKPQPVQKEVADIAL. Over residues 530 to 541 the composition is skewed to low complexity; it reads PKPQLKPQPVQK.

It belongs to the MQO family. Requires FAD as cofactor.

The enzyme catalyses (S)-malate + a quinone = a quinol + oxaloacetate. Its pathway is carbohydrate metabolism; tricarboxylic acid cycle; oxaloacetate from (S)-malate (quinone route): step 1/1. This chain is Probable malate:quinone oxidoreductase, found in Escherichia coli O17:K52:H18 (strain UMN026 / ExPEC).